The chain runs to 185 residues: Pyridoxal 5'-phosphate synthase subunit PdxT (185 aa).

46–48 (GES) provides a ligand contact to L-glutamine. Residue Cys78 is the Nucleophile of the active site. L-glutamine is bound by residues Arg106 and 132-133 (IR). Active-site charge relay system residues include His168 and Glu170.

The protein belongs to the glutaminase PdxT/SNO family. As to quaternary structure, in the presence of PdxS, forms a dodecamer of heterodimers. Only shows activity in the heterodimer.

The enzyme catalyses aldehydo-D-ribose 5-phosphate + D-glyceraldehyde 3-phosphate + L-glutamine = pyridoxal 5'-phosphate + L-glutamate + phosphate + 3 H2O + H(+). It catalyses the reaction L-glutamine + H2O = L-glutamate + NH4(+). Its pathway is cofactor biosynthesis; pyridoxal 5'-phosphate biosynthesis. Functionally, catalyzes the hydrolysis of glutamine to glutamate and ammonia as part of the biosynthesis of pyridoxal 5'-phosphate. The resulting ammonia molecule is channeled to the active site of PdxS. In Corynebacterium diphtheriae (strain ATCC 700971 / NCTC 13129 / Biotype gravis), this protein is Pyridoxal 5'-phosphate synthase subunit PdxT.